Reading from the N-terminus, the 251-residue chain is Probable transcriptional regulatory protein CC_3243 (251 aa).

Belongs to the TACO1 family.

Its subcellular location is the cytoplasm. This chain is Probable transcriptional regulatory protein CC_3243, found in Caulobacter vibrioides (strain ATCC 19089 / CIP 103742 / CB 15) (Caulobacter crescentus).